The chain runs to 88 residues: HssA/B-like protein 19 (88 aa).

The protein belongs to the hssA/B family.

This chain is HssA/B-like protein 19 (hssl19), found in Dictyostelium discoideum (Social amoeba).